Here is a 177-residue protein sequence, read N- to C-terminus: Large ribosomal subunit protein uL6 (177 aa).

The protein belongs to the universal ribosomal protein uL6 family. As to quaternary structure, part of the 50S ribosomal subunit.

Functionally, this protein binds to the 23S rRNA, and is important in its secondary structure. It is located near the subunit interface in the base of the L7/L12 stalk, and near the tRNA binding site of the peptidyltransferase center. The sequence is that of Large ribosomal subunit protein uL6 from Methylorubrum extorquens (strain CM4 / NCIMB 13688) (Methylobacterium extorquens).